The sequence spans 339 residues: DNA repair protein RAD51 homolog 1 (339 aa).

The disordered stretch occupies residues 1–23 (MAMQVQFEASTDTSAEEESFGPE). Positions 48–77 (TVESVAHAPKKELLNIKGISEAKADKILAE) constitute a HhH domain. 127–134 (GEFRTGKT) lines the ATP pocket.

The protein belongs to the RecA family. RAD51 subfamily. In terms of assembly, forms linear homooligomers, giving rise to a RAD51 nucleoprotein filament, which is essential for strand-pairing reactions during DNA recombination. In terms of tissue distribution, expressed at high levels in lymphoid and reproductive organs.

It localises to the nucleus. The protein localises to the cytoplasm. Its subcellular location is the chromosome. Its function is as follows. Plays an important role in homologous strand exchange, a key step in DNA repair through homologous recombination (HR). Binds to single-stranded DNA in an ATP-dependent manner to form nucleoprotein filaments which are essential for the homology search and strand exchange. Catalyzes the recognition of homology and strand exchange between homologous DNA partners to form a joint molecule between a processed DNA break and the repair template. Recruited to resolve stalled replication forks during replication stress. Also involved in interstrand cross-link repair. In Gallus gallus (Chicken), this protein is DNA repair protein RAD51 homolog 1 (RAD51A).